The following is a 750-amino-acid chain: Photosystem I P700 chlorophyll a apoprotein A1 (750 aa).

Transmembrane regions (helical) follow at residues 70–93, 156–179, 195–219, 291–309, 346–369, 385–411, 433–455, and 531–549; these read VFSA…FHGA, LYCT…FHYH, LNHH…HVSL, IAHH…GHMY, WHAQ…HHMY, LSLF…IFMV, AIIS…LYIH, and FLVH…LILL. The [4Fe-4S] cluster site is built by C573 and C582. The next 2 helical transmembrane spans lie at 589-610 and 664-686; these read HVFL…HFSW and LSAY…MFLF. A chlorophyll a'-binding site is contributed by H675. M683 and Y691 together coordinate chlorophyll a. Residue W692 participates in phylloquinone binding. A helical transmembrane segment spans residues 724-744; the sequence is AVGVTHYLLGGIATTWAFFLA.

This sequence belongs to the PsaA/PsaB family. The PsaA/B heterodimer binds the P700 chlorophyll special pair and subsequent electron acceptors. PSI consists of a core antenna complex that captures photons, and an electron transfer chain that converts photonic excitation into a charge separation. The eukaryotic PSI reaction center is composed of at least 11 subunits. P700 is a chlorophyll a/chlorophyll a' dimer, A0 is one or more chlorophyll a, A1 is one or both phylloquinones and FX is a shared 4Fe-4S iron-sulfur center. serves as cofactor.

It is found in the plastid. It localises to the chloroplast thylakoid membrane. It carries out the reaction reduced [plastocyanin] + hnu + oxidized [2Fe-2S]-[ferredoxin] = oxidized [plastocyanin] + reduced [2Fe-2S]-[ferredoxin]. In terms of biological role, psaA and PsaB bind P700, the primary electron donor of photosystem I (PSI), as well as the electron acceptors A0, A1 and FX. PSI is a plastocyanin-ferredoxin oxidoreductase, converting photonic excitation into a charge separation, which transfers an electron from the donor P700 chlorophyll pair to the spectroscopically characterized acceptors A0, A1, FX, FA and FB in turn. Oxidized P700 is reduced on the lumenal side of the thylakoid membrane by plastocyanin. This is Photosystem I P700 chlorophyll a apoprotein A1 from Arabis hirsuta (Hairy rock-cress).